A 138-amino-acid polypeptide reads, in one-letter code: MAARRLFGATGSWARWRAWELPDPAGSVRLHVRDYAKRPVFKGGKGAKGAAVGETLKDPEVCTDPVQLTTHPMGVNIYKEGQDVVLKPDSEYPEWLFQMNVGPPKKLEELDPETREYWRLLRKHNIWRHNRLSKNQKF.

The transit peptide at methionine 1–tryptophan 16 directs the protein to the mitochondrion.

This sequence belongs to the mitochondrion-specific ribosomal protein mL54 family. In terms of assembly, component of the mitochondrial ribosome large subunit (39S) which comprises a 16S rRNA and about 50 distinct proteins.

Its subcellular location is the mitochondrion. In Bos taurus (Bovine), this protein is Large ribosomal subunit protein mL54 (MRPL54).